The primary structure comprises 153 residues: 6,7-dimethyl-8-ribityllumazine synthase (153 aa).

5-amino-6-(D-ribitylamino)uracil-binding positions include phenylalanine 21, 55-57 (AFE), and 79-81 (TVI). Position 84-85 (84-85 (AT)) interacts with (2S)-2-hydroxy-3-oxobutyl phosphate. The active-site Proton donor is the histidine 87. Phenylalanine 112 is a 5-amino-6-(D-ribitylamino)uracil binding site. Position 126 (arginine 126) interacts with (2S)-2-hydroxy-3-oxobutyl phosphate.

It belongs to the DMRL synthase family. In terms of assembly, forms an icosahedral capsid composed of 60 subunits, arranged as a dodecamer of pentamers.

It carries out the reaction (2S)-2-hydroxy-3-oxobutyl phosphate + 5-amino-6-(D-ribitylamino)uracil = 6,7-dimethyl-8-(1-D-ribityl)lumazine + phosphate + 2 H2O + H(+). The protein operates within cofactor biosynthesis; riboflavin biosynthesis; riboflavin from 2-hydroxy-3-oxobutyl phosphate and 5-amino-6-(D-ribitylamino)uracil: step 1/2. Its function is as follows. Catalyzes the formation of 6,7-dimethyl-8-ribityllumazine by condensation of 5-amino-6-(D-ribitylamino)uracil with 3,4-dihydroxy-2-butanone 4-phosphate. This is the penultimate step in the biosynthesis of riboflavin. This Bacillus cereus (strain AH187) protein is 6,7-dimethyl-8-ribityllumazine synthase.